The following is a 105-amino-acid chain: Fungal protease inhibitor-1 (105 aa).

The first 19 residues, Met1–Gly19, serve as a signal peptide directing secretion. Cystine bridges form between Cys23-Cys56, Cys28-Cys58, Cys33-Cys59, Cys42-Cys62, Cys72-Cys93, and Cys87-Cys98.

Functionally, inhibits proteases from the fungi A.oryzae and R.oryzae, trypsin and chymotrypsin. Does not inhibit protease from the bacterium B.licheniformis or papain. This Antheraea mylitta (Tasar silkworm) protein is Fungal protease inhibitor-1.